Here is a 669-residue protein sequence, read N- to C-terminus: Translation factor GUF1, mitochondrial (669 aa).

A mitochondrion-targeting transit peptide spans 1–49 (MWTLAGQGWWRGRALAAWVTEAARKGLLWPHLAPARGTAAESRAPDRCY). One can recognise a tr-type G domain in the interval 66 to 247 (ENTRNFSIIA…AVIKRIPFPK (182 aa)). Residues 75–82 (AHVDHGKS), 140–144 (DTPGH), and 194–197 (NKID) each bind GTP.

It belongs to the TRAFAC class translation factor GTPase superfamily. Classic translation factor GTPase family. LepA subfamily.

Its subcellular location is the mitochondrion inner membrane. It catalyses the reaction GTP + H2O = GDP + phosphate + H(+). In terms of biological role, promotes mitochondrial protein synthesis. May act as a fidelity factor of the translation reaction, by catalyzing a one-codon backward translocation of tRNAs on improperly translocated ribosomes. Binds to mitochondrial ribosomes in a GTP-dependent manner. This chain is Translation factor GUF1, mitochondrial, found in Bos taurus (Bovine).